The following is a 69-amino-acid chain: Large ribosomal subunit protein bL28 (69 aa).

The protein belongs to the bacterial ribosomal protein bL28 family.

The chain is Large ribosomal subunit protein bL28 from Nitratidesulfovibrio vulgaris (strain DSM 19637 / Miyazaki F) (Desulfovibrio vulgaris).